A 755-amino-acid polypeptide reads, in one-letter code: Large structural phosphoprotein (755 aa).

2 disordered regions span residues 312–333 and 522–555; these read ESSSKKTSHGSSFNPEPFIKTE and QSFDDEHNEMSLPPQDQKSIKQKNGNKANSSTKT. Over residues 535–555 the composition is skewed to polar residues; that stretch reads PQDQKSIKQKNGNKANSSTKT.

This sequence belongs to the herpesviridae large structural phosphoprotein family. Phosphorylated at multiple sites.

It localises to the virion tegument. In Homo sapiens (Human), this protein is Large structural phosphoprotein (U11).